We begin with the raw amino-acid sequence, 285 residues long: Transcription factor LBX1 (285 aa).

Over residues 1-20 the composition is skewed to basic and acidic residues; that stretch reads MTSKEDGKAAPGEERRRSPL. The interval 1–36 is disordered; it reads MTSKEDGKAAPGEERRRSPLDHLPPPANSNKPLTPF. The homeobox DNA-binding region spans 125-184; sequence RRKSRTAFTNHQIYELEKRFLYQKYLSPADRDQIAQQLGLTNAQVITWFQNRRAKLKRDL. The interval 212 to 285 is disordered; it reads EQNSEASGGG…EEDEEIDVDD (74 aa). Residues 218 to 230 show a composition bias toward gly residues; that stretch reads SGGGGGGGGGGCG. Acidic residues predominate over residues 272 to 285; sequence CSEDEEDEEIDVDD.

Interacts with SKOR1 which acts as a transcriptional corepressor.

The protein localises to the nucleus. Its function is as follows. Transcription factor required for the development of GABAergic interneurons in the dorsal horn of the spinal cord and migration and further development of hypaxial muscle precursor cells for limb muscles, diaphragm and hypoglossal cord. In Rattus norvegicus (Rat), this protein is Transcription factor LBX1.